The sequence spans 268 residues: Putative hydro-lyase ABSDF2257 (268 aa).

It belongs to the D-glutamate cyclase family.

The chain is Putative hydro-lyase ABSDF2257 from Acinetobacter baumannii (strain SDF).